A 264-amino-acid chain; its full sequence is uncharacterized protein (264 aa).

2 disordered regions span residues 1–52 and 123–207; these read MPRS…AVPG and GGRW…PWTR. The segment covering 29-40 has biased composition (low complexity); sequence AAHPTTSPTAAS. The span at 144–154 shows a compositional bias: polar residues; that stretch reads HFQSSGAQQES. The span at 188 to 197 shows a compositional bias: basic residues; sequence ARKSACKCPR.

This is an uncharacterized protein from Homo sapiens (Human).